The sequence spans 207 residues: Small ribosomal subunit protein uS4 (207 aa).

The disordered stretch occupies residues 20 to 45 (TPKAARYMEKRPYAPGEHGRTKRKAD). The region spanning 93 to 158 (MRLDALVLRA…TEPFQVAAAG (66 aa)) is the S4 RNA-binding domain.

The protein belongs to the universal ribosomal protein uS4 family. In terms of assembly, part of the 30S ribosomal subunit. Contacts protein S5. The interaction surface between S4 and S5 is involved in control of translational fidelity.

One of the primary rRNA binding proteins, it binds directly to 16S rRNA where it nucleates assembly of the body of the 30S subunit. In terms of biological role, with S5 and S12 plays an important role in translational accuracy. In Leifsonia xyli subsp. xyli (strain CTCB07), this protein is Small ribosomal subunit protein uS4.